Reading from the N-terminus, the 615-residue chain is Delta(14)-sterol reductase LBR (615 aa).

Positions 1–62 (MPSRKFADGE…DIKPLTSFRQ (62 aa)) constitute a Tudor domain. At 1–211 (MPSRKFADGE…IRAKDLEFGG (211 aa)) the chain is on the nuclear side. The tract at residues 53 to 109 (DIKPLTSFRQRKGGSTSSSPSRRRGSRSRSRSRSPGRPPKSARRSASASHQADIKEA) is disordered. At lysine 55 the chain carries N6-acetyllysine. Threonine 58 is subject to Phosphothreonine. Residues serine 59 and serine 67 each carry the phosphoserine modification. Serine 71 and serine 86 each carry phosphoserine; by CDK1. The segment covering 73–86 (SRRRGSRSRSRSRS) has biased composition (basic residues). Residues serine 97 and serine 99 each carry the phosphoserine modification. The residue at position 118 (threonine 118) is a Phosphothreonine. Serine 128 bears the Phosphoserine mark. Threonine 200 carries the post-translational modification Phosphothreonine. The next 8 helical transmembrane spans lie at 212–232 (VPGV…LLLM), 258–278 (VFGV…LPIG), 299–319 (FYAF…GVEF), 326–346 (FLQF…YLYM), 415–435 (VPSL…VDAL), 447–467 (IIHD…VPFI), 481–501 (EVSW…YVIF), and 561–581 (ACGF…MLLV). Residues lysine 594 and lysine 601 each carry the N6-acetyllysine modification.

It belongs to the ERG4/ERG24 family. Interacts with CBX5. Interacts with DNA. Interaction with DNA is sequence independent with higher affinity for supercoiled and relaxed circular DNA than linear DNA. Interacts with lamin B. Interacts with CLNK. Interacts with TMEM147; promoting LBR localization to the nucleus inner membrane. Post-translationally, phosphorylated by CDK1 in mitosis when the inner nuclear membrane breaks down into vesicles that dissociate from the lamina and the chromatin. It is phosphorylated by different protein kinases in interphase when the membrane is associated with these structures. Phosphorylation of LBR and HP1 proteins may be responsible for some of the alterations in chromatin organization and nuclear structure which occur at various times during the cell cycle. Phosphorylated by SRPK1. In late anaphase LBR is dephosphorylated, probably by PP1 and/or PP2A, allowing reassociation with chromatin.

The protein localises to the nucleus inner membrane. The protein resides in the nucleus. It localises to the cytoplasm. Its subcellular location is the endoplasmic reticulum membrane. The enzyme catalyses 5alpha-cholest-8,14-dien-3beta-ol + NADPH + H(+) = 5alpha-cholest-8-en-3beta-ol + NADP(+). It carries out the reaction 4,4-dimethyl-5alpha-cholesta-8,24-dien-3beta-ol + NADP(+) = 4,4-dimethyl-5alpha-cholesta-8,14,24-trien-3beta-ol + NADPH + H(+). The catalysed reaction is 4,4-dimethyl-8,14-cholestadien-3beta-ol + NADPH + H(+) = 4,4-dimethyl-5alpha-cholest-8-en-3beta-ol + NADP(+). The protein operates within steroid biosynthesis; cholesterol biosynthesis. Its function is as follows. Catalyzes the reduction of the C14-unsaturated bond of lanosterol, as part of the metabolic pathway leading to cholesterol biosynthesis. Plays a critical role in myeloid cell cholesterol biosynthesis which is essential to both myeloid cell growth and functional maturation. Mediates the activation of NADPH oxidases, perhaps by maintaining critical levels of cholesterol required for membrane lipid raft formation during neutrophil differentiation. Anchors the lamina and the heterochromatin to the inner nuclear membrane. The protein is Delta(14)-sterol reductase LBR (LBR) of Pongo abelii (Sumatran orangutan).